The sequence spans 539 residues: MPSSNGSSDFVRKLFNMLEEPEYRHILRWSDSGDSFIVLDTNEFTKTILPRHFKHSNFASFVRQLNKYDFHKVRHEEGAPSIYGEGAWEFRHDDFQLHHKDLLDNIKRKAPSKRNLANENTAPVIENLKQQVDSILDFQKLLDRNLSGLATSYQTILLKMFELKRGIESRDLLMSSIISYLCDLEGSTQRQANPGAMFVPSHPLQELLNAYQALAKGQVATTSPQQIPNQIQQASAATTASSKMTVDTNLGTAQPSLYNTPSSDYELANQEKPADSMASAASLNTPLSSNDHSLNPHAHGSYPMYEKFQPIQHPNPGSFTTHLDSNASMAKSFSQISNDSLAKASSVATSMSQMGAAVPTTGLWKRQPRILLVEDDELSRRMTIKFLTSFDCQVDVAVDGIGAVNKANAGGFDLILMDFILPNLDGLSVTCLIRQYDHNTPILAITSNISMNDAVTYFNHGVTDLLVKPFTKLTLLQLLKKQLLNLLQADNSINMSDVPSTKEAKDDKAPVTFYLENDAPMYPQQMLQDPIQADLQHPH.

Residues S7–P111 mediate DNA binding. At T221 the chain carries Phosphothreonine. S223 carries the post-translational modification Phosphoserine. The segment covering G251–S263 has biased composition (polar residues). The interval G251–A281 is disordered. Positions R369 to L483 constitute a Response regulatory domain. At D418 the chain carries 4-aspartylphosphate.

In the N-terminal section; belongs to the HSF family.

Its subcellular location is the nucleus. Involved in oxidative stress. Transcription factor that acts upon trr1 and ctt1. This Schizosaccharomyces pombe (strain 972 / ATCC 24843) (Fission yeast) protein is Transcription factor prr1 (prr1).